Reading from the N-terminus, the 200-residue chain is Small ribosomal subunit protein uS4 (200 aa).

The tract at residues 22 to 42 (TGKELEKRPYAPGPHGPNQRK) is disordered. The 61-residue stretch at 92 to 152 (ARLDNLVYRM…EKSNNLVVVK (61 aa)) folds into the S4 RNA-binding domain.

This sequence belongs to the universal ribosomal protein uS4 family. Part of the 30S ribosomal subunit. Contacts protein S5. The interaction surface between S4 and S5 is involved in control of translational fidelity.

Functionally, one of the primary rRNA binding proteins, it binds directly to 16S rRNA where it nucleates assembly of the body of the 30S subunit. In terms of biological role, with S5 and S12 plays an important role in translational accuracy. This Bacillus cereus (strain Q1) protein is Small ribosomal subunit protein uS4.